Here is a 181-residue protein sequence, read N- to C-terminus: UPF0228 protein MA_3117 (181 aa).

Belongs to the UPF0228 family.

The sequence is that of UPF0228 protein MA_3117 from Methanosarcina acetivorans (strain ATCC 35395 / DSM 2834 / JCM 12185 / C2A).